Here is a 425-residue protein sequence, read N- to C-terminus: Histone-binding protein RBBP4 (425 aa).

Ala2 is subject to N-acetylalanine. Position 4 is an N6-acetyllysine; alternate (Lys4). Residue Lys4 forms a Glycyl lysine isopeptide (Lys-Gly) (interchain with G-Cter in SUMO2); alternate linkage. A Glycyl lysine isopeptide (Lys-Gly) (interchain with G-Cter in ubiquitin); alternate cross-link involves residue Lys4. WD repeat units lie at residues 32-125 (YDLV…NHEG), 126-175 (EVNR…RLRG), 176-223 (HQKE…KTIF), 225-270 (GHTA…HSVD), 271-314 (AHTA…HSFE), 315-371 (SHKD…FIHG), and 372-404 (GHTA…VWQM). Ser110 is subject to Phosphoserine. Lys160 bears the N6-acetyllysine; alternate mark. Residue Lys160 forms a Glycyl lysine isopeptide (Lys-Gly) (interchain with G-Cter in SUMO2); alternate linkage. At Ser355 the chain carries Phosphoserine.

Belongs to the WD repeat RBAP46/RBAP48/MSI1 family. As to quaternary structure, binds directly to helix 1 of the histone fold of histone H4, a region that is not accessible when H4 is in chromatin. Subunit of the chromatin assembly factor 1 (CAF-1) complex, which is composed of RBBP4, CHAF1B and CHAF1A. Subunit of the core histone deacetylase (HDAC) complex, which is composed of HDAC1, HDAC2, RBBP4 and RBBP7. The core HDAC complex associates with SIN3A, ARID4B/SAP180, SAP18, SAP30, SAP130, SUDS3/SAP45 and possibly ARID4A/RBP1 and ING1 to form the SIN3 HDAC complex. Component of the nucleosome remodeling and deacetylase (NuRD) repressor complex, composed of core proteins MTA1, MTA2, MTA3, RBBP4, RBBP7, HDAC1, HDAC2, MBD2, MBD3, and peripherally associated proteins CDK2AP1, CDK2AP2, GATAD2A, GATAD2B, CHD3, CHD4 and CHD5. The exact stoichiometry of the NuRD complex is unknown, and some subunits such as MBD2 and MBD3, GATAD2A and GATAD2B, and CHD3, CHD4 and CHD5 define mutually exclusive NuRD complexes. Interacts with ZNF512B; the interaction is direct and may play a role in repressing gene expression. The NuRD complex may also interact with MBD3L1 and MBD3L2. Component of the PRC2 complex, which consists of the core subunits EED, EZH1 or EZH2, SUZ12, and RBBP4, and various combinations of accessory subunits including AEBP2, JARID2, PHF19, MTF2 and EPOP. Forms a monomeric PRC2.2 (class 2) complex consisting of at least SUZ12, RBBP4, AEBP2 and JARID2. Forms a dimeric PRC2.1 (class 1, PRC-PCL) complex consisting of at least SUZ12, RBBP4, and PHF19; PHF19 stabilizes the dimeric structure which enhances PRC2 interaction with chromatin. Component of the NURF-1 ISWI chromatin remodeling complex (also called the nucleosome-remodeling factor (NURF) complex) at least composed of SMARCA1 (isoform 2), BPTF, RBBP4 and RBBP7. Within the complex interacts with isoform 2 of SMARCA1. Component of the BPFT-SMARCA1 complex at least composed of SMARCA1 (isoform 1), BPFT, RBBP4 and RBBP7; the complex is catalytically inactive and does not remodel chromatin. Within the complex interacts with isoform 1 of SMARCA1. Interacts with the ISWI chromatin remodeling complex component SMARCA5; the interaction is direct. Interacts with the viral protein-binding domain of the retinoblastoma protein (RB1). Component of the DREAM complex (also named LINC complex) at least composed of E2F4, E2F5, LIN9, LIN37, LIN52, LIN54, MYBL1, MYBL2, RBL1, RBL2, RBBP4, TFDP1 and TFDP2. The complex exists in quiescent cells where it represses cell cycle-dependent genes. It dissociates in S phase when LIN9, LIN37, LIN52 and LIN54 form a subcomplex that binds to MYBL2. Found in a complex composed of at least SINHCAF, SIN3A, HDAC1, SAP30, RBBP4, OGT and TET1. Interacts with ZNF827; the interaction is direct and recruits RBBP4 to telomeres. Interacts with MTA1; the interaction is direct and mutually exclusive with binding histone H4. Interacts with ARMC12 (via ARM domains). Interacts with BRCA1. Interacts with CDK2AP1. Interacts with CREBBP, and this interaction may be enhanced by the binding of phosphorylated CREB1 to CREBBP. Interacts with ERCC6. Interacts with HDAC7. Interacts with PHF6. Interacts with PWWP2B. Interacts with SPEN/MINT. Interacts with SUV39H1.

Its subcellular location is the nucleus. It localises to the chromosome. The protein resides in the telomere. Core histone-binding subunit that may target chromatin assembly factors, chromatin remodeling factors and histone deacetylases to their histone substrates in a manner that is regulated by nucleosomal DNA. Component of the chromatin assembly factor 1 (CAF-1) complex, which is required for chromatin assembly following DNA replication and DNA repair. Component of the core histone deacetylase (HDAC) complex, which promotes histone deacetylation and consequent transcriptional repression. Component of the nucleosome remodeling and histone deacetylase complex (the NuRD complex), which promotes transcriptional repression by histone deacetylation and nucleosome remodeling. Component of the PRC2 complex, which promotes repression of homeotic genes during development. Component of the NURF (nucleosome remodeling factor) complex. In Bos taurus (Bovine), this protein is Histone-binding protein RBBP4 (RBBP4).